The following is a 429-amino-acid chain: Autophagy-related protein 18 (429 aa).

7 WD repeats span residues 1 to 36 (MAMN…KSYE), 69 to 114 (KRQS…LLYT), 139 to 182 (PLPQ…AINV), 185 to 225 (AHRS…KLYQ), 230 to 269 (SMPS…SSPD), 309 to 355 (KHNG…AWFK), and 367 to 407 (VNNG…GGEG). The short motif at 226–230 (FRRGS) is the L/FRRG motif element. The span at 262–275 (SHPTSSPDASPSSP) shows a compositional bias: low complexity. The tract at residues 262 to 308 (SHPTSSPDASPSSPVGRDRSLSQSSSGYSPDRGDLTGDVGSSDFPAR) is disordered.

Belongs to the WD repeat PROPPIN family. In terms of assembly, component of the PI(3,5)P2 regulatory complex.

It localises to the preautophagosomal structure membrane. It is found in the vacuole membrane. The protein resides in the endosome membrane. Its function is as follows. The PI(3,5)P2 regulatory complex regulates both the synthesis and turnover of phosphatidylinositol 3,5-bisphosphate (PtdIns(3,5)P2). Necessary for proper vacuole morphology. Plays an important role in osmotically-induced vacuole fragmentation. Required for cytoplasm to vacuole transport (Cvt) vesicle formation, pexophagy and starvation-induced autophagy. Involved in correct atg9 trafficking to the pre-autophagosomal structure. Might also be involved in premeiotic DNA replication. The protein is Autophagy-related protein 18 (atg18) of Neosartorya fischeri (strain ATCC 1020 / DSM 3700 / CBS 544.65 / FGSC A1164 / JCM 1740 / NRRL 181 / WB 181) (Aspergillus fischerianus).